A 265-amino-acid chain; its full sequence is Mlc titration factor A (265 aa).

The Zn(2+) site is built by H111, H148, H152, and E211.

It belongs to the MtfA family. Interacts with Mlc. The cofactor is Zn(2+).

It is found in the cytoplasm. In terms of biological role, involved in the modulation of the activity of the glucose-phosphotransferase system (glucose-PTS). Interacts with the transcriptional repressor Mlc, preventing its interaction with DNA and leading to the modulation of expression of genes regulated by Mlc, including ptsG, which encodes the PTS system glucose-specific EIICB component. Shows zinc-dependent metallopeptidase activity. This is Mlc titration factor A from Salmonella typhi.